The sequence spans 76 residues: Large ribosomal subunit protein eL38 (76 aa).

The protein belongs to the eukaryotic ribosomal protein eL38 family.

The protein is Large ribosomal subunit protein eL38 (RpL38) of Lysiphlebus testaceipes (Greenbugs aphid parastoid).